A 347-amino-acid polypeptide reads, in one-letter code: NADH-quinone oxidoreductase subunit H (347 aa).

Transmembrane regions (helical) follow at residues 22–42 (GVVS…TAYL), 59–79 (PSLA…KLVF), 93–113 (FIIA…VIPI), 124–144 (IGGI…IIIA), 171–191 (MALS…IQIV), 198–218 (PIWL…SILA), 240–260 (VEYS…NMIL), 285–305 (IPGY…FLWI), and 321–341 (GLKV…AILV).

Belongs to the complex I subunit 1 family. As to quaternary structure, NDH-1 is composed of 14 different subunits. Subunits NuoA, H, J, K, L, M, N constitute the membrane sector of the complex.

The protein localises to the cell inner membrane. It carries out the reaction a quinone + NADH + 5 H(+)(in) = a quinol + NAD(+) + 4 H(+)(out). Its function is as follows. NDH-1 shuttles electrons from NADH, via FMN and iron-sulfur (Fe-S) centers, to quinones in the respiratory chain. The immediate electron acceptor for the enzyme in this species is believed to be ubiquinone. Couples the redox reaction to proton translocation (for every two electrons transferred, four hydrogen ions are translocated across the cytoplasmic membrane), and thus conserves the redox energy in a proton gradient. This subunit may bind ubiquinone. This Orientia tsutsugamushi (strain Ikeda) (Rickettsia tsutsugamushi) protein is NADH-quinone oxidoreductase subunit H.